Here is a 426-residue protein sequence, read N- to C-terminus: Glutamyl-tRNA reductase (426 aa).

Substrate-binding positions include 49–52, Ser-110, 115–117, and Gln-121; these read TCNR and EAQ. Catalysis depends on Cys-50, which acts as the Nucleophile. 191–196 contacts NADP(+); sequence GAGEMA.

The protein belongs to the glutamyl-tRNA reductase family. Homodimer.

It catalyses the reaction (S)-4-amino-5-oxopentanoate + tRNA(Glu) + NADP(+) = L-glutamyl-tRNA(Glu) + NADPH + H(+). Its pathway is porphyrin-containing compound metabolism; protoporphyrin-IX biosynthesis; 5-aminolevulinate from L-glutamyl-tRNA(Glu): step 1/2. Catalyzes the NADPH-dependent reduction of glutamyl-tRNA(Glu) to glutamate 1-semialdehyde (GSA). The sequence is that of Glutamyl-tRNA reductase from Rhodopirellula baltica (strain DSM 10527 / NCIMB 13988 / SH1).